The following is a 212-amino-acid chain: Ribonuclease HII (212 aa).

Positions 18 to 212 (GCVFGVDEAG…APVAQQELFR (195 aa)) constitute an RNase H type-2 domain. Positions 24, 25, and 118 each coordinate a divalent metal cation.

This sequence belongs to the RNase HII family. Mn(2+) is required as a cofactor. Mg(2+) serves as cofactor.

The protein localises to the cytoplasm. The enzyme catalyses Endonucleolytic cleavage to 5'-phosphomonoester.. In terms of biological role, endonuclease that specifically degrades the RNA of RNA-DNA hybrids. The polypeptide is Ribonuclease HII (Erythrobacter litoralis (strain HTCC2594)).